Here is a 151-residue protein sequence, read N- to C-terminus: UPF0208 membrane protein YPDSF_1972 (151 aa).

Transmembrane regions (helical) follow at residues 46–66 (FGIR…IALG) and 69–89 (LGPA…GLWW).

Belongs to the UPF0208 family.

The protein localises to the cell inner membrane. This chain is UPF0208 membrane protein YPDSF_1972, found in Yersinia pestis (strain Pestoides F).